The primary structure comprises 553 residues: Putative transport protein YidE (553 aa).

The next 5 helical transmembrane spans lie at 4–24, 28–48, 65–85, 95–115, and 158–178; these read IALT…IGNV, GIGL…HFVS, FGLI…FFAS, LFAV…HKLF, and MSYA…MWML. RCK C-terminal domains are found at residues 191–276 and 279–361; these read QQHE…VIGQ and DTSL…VLGN. 6 helical membrane passes run 371–391, 393–413, 439–459, 464–484, 493–513, and 533–553; these read MLPV…PVFV, GFPA…ALIL, IVLF…NTLV, LSWI…VGIL, YLTM…LAFA, and LVMF…WSIG.

Belongs to the AAE transporter (TC 2.A.81) family. YidE subfamily.

Its subcellular location is the cell membrane. This Escherichia coli (strain ATCC 8739 / DSM 1576 / NBRC 3972 / NCIMB 8545 / WDCM 00012 / Crooks) protein is Putative transport protein YidE.